A 365-amino-acid polypeptide reads, in one-letter code: Baculoviral IAP repeat-containing protein 7 (365 aa).

BIR repeat units follow at residues Arg7 to Gln73 and Arg115 to Leu180. Positions 149, 152, 169, and 176 each coordinate Zn(2+). The self-inhibits the anti-apoptotic function stretch occupies residues Ala186–Ala234. Ser198 carries the phosphoserine modification. Ser202 bears the Phosphoserine; by MAPK1 mark. Ser212 carries the post-translational modification Phosphoserine. Residues Ser216 and Ser219 each carry the phosphoserine; by MAPK1 modification. Residues Thr278–Glu306 form a disordered region. The segment covering Thr288–Lys297 has biased composition (basic and acidic residues). The RING-type zinc finger occupies Cys318 to Arg353.

It belongs to the IAP family. In terms of processing, auto-ubiquitinated, and degraded in a 2-step mechanism; a caspase-independent first step and a caspase-dependent second step. Phosphorylated via MAPK-dependent and CDK-dependent pathways during oocyte maturation. Phosphorylation does not appear to affect caspase inhibition or autoubiquitination activity.

The protein resides in the cytoplasm. It catalyses the reaction S-ubiquitinyl-[E2 ubiquitin-conjugating enzyme]-L-cysteine + [acceptor protein]-L-lysine = [E2 ubiquitin-conjugating enzyme]-L-cysteine + N(6)-ubiquitinyl-[acceptor protein]-L-lysine.. Its function is as follows. Weak apoptotic suppressor. Has E3 ubiquitin-protein ligase activity. Weak inhibitor of caspase activity. The sequence is that of Baculoviral IAP repeat-containing protein 7 (birc7) from Xenopus tropicalis (Western clawed frog).